Here is a 734-residue protein sequence, read N- to C-terminus: 1,4-alpha-glucan branching enzyme GlgB (734 aa).

The active-site Nucleophile is the aspartate 414. Residue glutamate 467 is the Proton donor of the active site.

The protein belongs to the glycosyl hydrolase 13 family. GlgB subfamily. In terms of assembly, monomer.

It catalyses the reaction Transfers a segment of a (1-&gt;4)-alpha-D-glucan chain to a primary hydroxy group in a similar glucan chain.. Its pathway is glycan biosynthesis; glycogen biosynthesis. Its function is as follows. Catalyzes the formation of the alpha-1,6-glucosidic linkages in glycogen by scission of a 1,4-alpha-linked oligosaccharide from growing alpha-1,4-glucan chains and the subsequent attachment of the oligosaccharide to the alpha-1,6 position. The chain is 1,4-alpha-glucan branching enzyme GlgB from Myxococcus xanthus (strain DK1622).